Consider the following 115-residue polypeptide: Large ribosomal subunit protein uL24 (115 aa).

It belongs to the universal ribosomal protein uL24 family. Part of the 50S ribosomal subunit.

Functionally, one of two assembly initiator proteins, it binds directly to the 5'-end of the 23S rRNA, where it nucleates assembly of the 50S subunit. In terms of biological role, one of the proteins that surrounds the polypeptide exit tunnel on the outside of the subunit. This Beutenbergia cavernae (strain ATCC BAA-8 / DSM 12333 / CCUG 43141 / JCM 11478 / NBRC 16432 / NCIMB 13614 / HKI 0122) protein is Large ribosomal subunit protein uL24.